Consider the following 241-residue polypeptide: Phycocyanobilin:ferredoxin oxidoreductase (241 aa).

This sequence belongs to the HY2 family.

It carries out the reaction (2R,3Z)-phycocyanobilin + 4 oxidized [2Fe-2S]-[ferredoxin] = biliverdin IXalpha + 4 reduced [2Fe-2S]-[ferredoxin] + 4 H(+). Catalyzes the four-electron reduction of biliverdin IX-alpha (2-electron reduction at both the A and D rings); the reaction proceeds via an isolatable 2-electron intermediate, 181,182-dihydrobiliverdin. This Prochlorococcus marinus (strain MIT 9515) protein is Phycocyanobilin:ferredoxin oxidoreductase.